The following is a 267-amino-acid chain: Hydroxyethylthiazole kinase (267 aa).

Residue M46 coordinates substrate. R122 and S168 together coordinate ATP. G195 provides a ligand contact to substrate.

The protein belongs to the Thz kinase family. Requires Mg(2+) as cofactor.

The enzyme catalyses 5-(2-hydroxyethyl)-4-methylthiazole + ATP = 4-methyl-5-(2-phosphooxyethyl)-thiazole + ADP + H(+). It participates in cofactor biosynthesis; thiamine diphosphate biosynthesis; 4-methyl-5-(2-phosphoethyl)-thiazole from 5-(2-hydroxyethyl)-4-methylthiazole: step 1/1. Catalyzes the phosphorylation of the hydroxyl group of 4-methyl-5-beta-hydroxyethylthiazole (THZ). In Nitratidesulfovibrio vulgaris (strain ATCC 29579 / DSM 644 / CCUG 34227 / NCIMB 8303 / VKM B-1760 / Hildenborough) (Desulfovibrio vulgaris), this protein is Hydroxyethylthiazole kinase.